A 229-amino-acid chain; its full sequence is High molecular weight rubredoxin (229 aa).

Residues 1-158 form a flavodoxin-reductase-like region; that stretch reads MDTKALHTLT…YYHQVKRGTT (158 aa). A Rubredoxin-like domain is found at 178 to 229; the sequence is SPKYQCTICNYVYDPVQGDPEHGIAPGTPFADLPEDWTCPICGAGKDAFEQI. Residues cysteine 183, cysteine 186, cysteine 216, and cysteine 219 each contribute to the Fe cation site.

This sequence in the N-terminal section; belongs to the flavodoxin reductase family. As to quaternary structure, homodimer. Fe cation is required as a cofactor. It depends on FMN as a cofactor.

In terms of biological role, has nitric oxide reductase activity in combination with FprA; probably involved in nitrosative stress protection. Acts as an NADH:FprA oxidoreductase. The polypeptide is High molecular weight rubredoxin (hrb) (Moorella thermoacetica (strain ATCC 39073 / JCM 9320)).